Consider the following 916-residue polypeptide: Translation initiation factor IF-2 (916 aa).

Positions 50–326 are disordered; the sequence is NRDKESTSQP…NSTLQQGFNK (277 aa). The segment covering 109–241 has biased composition (basic and acidic residues); the sequence is AQREAEEKAR…LAEENAEKWT (133 aa). Basic residues predominate over residues 277 to 291; sequence GRGRAAKAPRPKKNN. A compositionally biased stretch (basic and acidic residues) spans 292-304; the sequence is RHSEKADREEARA. Residues 415–584 form the tr-type G domain; it reads SRAPVVTIMG…LLQAEVLELK (170 aa). The G1 stretch occupies residues 424–431; the sequence is GHVDHGKT. Residue 424-431 participates in GTP binding; the sequence is GHVDHGKT. Positions 449-453 are G2; the sequence is GITQH. The tract at residues 470–473 is G3; that stretch reads DTPG. GTP is bound by residues 470 to 474 and 524 to 527; these read DTPGH and NKID. The G4 stretch occupies residues 524 to 527; that stretch reads NKID. A G5 region spans residues 560–562; sequence SAK.

It belongs to the TRAFAC class translation factor GTPase superfamily. Classic translation factor GTPase family. IF-2 subfamily.

Its subcellular location is the cytoplasm. One of the essential components for the initiation of protein synthesis. Protects formylmethionyl-tRNA from spontaneous hydrolysis and promotes its binding to the 30S ribosomal subunits. Also involved in the hydrolysis of GTP during the formation of the 70S ribosomal complex. The polypeptide is Translation initiation factor IF-2 (Proteus mirabilis (strain HI4320)).